Reading from the N-terminus, the 97-residue chain is MSFFRVRLERSAIGLSSKVRSVLHSLRLTKRHSVVYCDVNPINAGRIFKVKELVSVSTVKQKLAAGQEKKSLASSSGFTVIHRYNNGLKELNNMFES.

Belongs to the universal ribosomal protein uL30 family. Component of the mitochondrial large ribosomal subunit (mt-LSU). Mature yeast 74S mitochondrial ribosomes consist of a small (37S) and a large (54S) subunit. The 37S small subunit contains a 15S ribosomal RNA (15S mt-rRNA) and at least 32 different proteins. The 54S large subunit contains a 21S rRNA (21S mt-rRNA) and at least 45 different proteins.

Its subcellular location is the mitochondrion. In terms of biological role, component of the mitochondrial ribosome (mitoribosome), a dedicated translation machinery responsible for the synthesis of mitochondrial genome-encoded proteins, including at least some of the essential transmembrane subunits of the mitochondrial respiratory chain. The mitoribosomes are attached to the mitochondrial inner membrane and translation products are cotranslationally integrated into the membrane. The sequence is that of Large ribosomal subunit protein uL30m (mrpl33) from Schizosaccharomyces pombe (strain 972 / ATCC 24843) (Fission yeast).